The chain runs to 406 residues: Argininosuccinate synthase (406 aa).

Residues 12-20 (AYSGGLDTS) and A40 contribute to the ATP site. 2 residues coordinate L-citrulline: Y92 and S97. G122 provides a ligand contact to ATP. Residues T124, N128, and D129 each contribute to the L-aspartate site. Position 128 (N128) interacts with L-citrulline. Positions 132, 181, 190, 266, and 278 each coordinate L-citrulline.

This sequence belongs to the argininosuccinate synthase family. Type 1 subfamily. As to quaternary structure, homotetramer.

It is found in the cytoplasm. It carries out the reaction L-citrulline + L-aspartate + ATP = 2-(N(omega)-L-arginino)succinate + AMP + diphosphate + H(+). It participates in amino-acid biosynthesis; L-arginine biosynthesis; L-arginine from L-ornithine and carbamoyl phosphate: step 2/3. In Serratia proteamaculans (strain 568), this protein is Argininosuccinate synthase.